Here is a 190-residue protein sequence, read N- to C-terminus: Putative hydrolase YdeN (190 aa).

Catalysis depends on charge relay system residues Ser-71, Asp-137, and His-164.

Belongs to the RBBP9 family.

This chain is Putative hydrolase YdeN (ydeN), found in Bacillus subtilis (strain 168).